Reading from the N-terminus, the 731-residue chain is Catalase-peroxidase 2 (731 aa).

Residues methionine 1–serine 10 show a composition bias toward polar residues. Residues methionine 1–tryptophan 26 are disordered. A cross-link (tryptophyl-tyrosyl-methioninium (Trp-Tyr) (with M-244)) is located at residues tryptophan 95–tyrosine 218. Histidine 96 acts as the Proton acceptor in catalysis. Residues tyrosine 218–methionine 244 constitute a cross-link (tryptophyl-tyrosyl-methioninium (Tyr-Met) (with W-95)). Heme b is bound at residue histidine 259.

Homodimer. Heme b is required as a cofactor. In terms of processing, formation of the three residue Trp-Tyr-Met cross-link is important for the catalase, but not the peroxidase activity of the enzyme.

It carries out the reaction H2O2 + AH2 = A + 2 H2O. The enzyme catalyses 2 H2O2 = O2 + 2 H2O. Bifunctional enzyme with both catalase and broad-spectrum peroxidase activity. This is Catalase-peroxidase 2 from Haloarcula marismortui (strain ATCC 43049 / DSM 3752 / JCM 8966 / VKM B-1809) (Halobacterium marismortui).